Reading from the N-terminus, the 81-residue chain is YcgL domain-containing protein Tgr7_3126 (81 aa).

The YcgL domain maps to Met1–Leu81.

The sequence is that of YcgL domain-containing protein Tgr7_3126 from Thioalkalivibrio sulfidiphilus (strain HL-EbGR7).